A 200-amino-acid chain; its full sequence is Mediator of RNA polymerase II transcription subunit 29 (200 aa).

Composition is skewed to low complexity over residues 1–21 (MAASQQQASAASSAAGVSGPS) and 36–48 (AQLVGPAQSGLLQ). The interval 1-48 (MAASQQQASAASSAAGVSGPSSAGGPGPQQQPQPPAQLVGPAQSGLLQ) is disordered. Alanine 2 is subject to N-acetylalanine.

This sequence belongs to the Mediator complex subunit 29 family. Component of the Mediator complex, which is composed of MED1, MED4, MED6, MED7, MED8, MED9, MED10, MED11, MED12, MED13, MED13L, MED14, MED15, MED16, MED17, MED18, MED19, MED20, MED21, MED22, MED23, MED24, MED25, MED26, MED27, MED29, MED30, MED31, CCNC, CDK8 and CDC2L6/CDK11. The MED12, MED13, CCNC and CDK8 subunits form a distinct module termed the CDK8 module. Mediator containing the CDK8 module is less active than Mediator lacking this module in supporting transcriptional activation. Individual preparations of the Mediator complex lacking one or more distinct subunits have been variously termed ARC, CRSP, DRIP, PC2, SMCC and TRAP. Associates with the MED18/MED20 heteromer.

Its subcellular location is the nucleus. In terms of biological role, component of the Mediator complex, a coactivator involved in the regulated transcription of nearly all RNA polymerase II-dependent genes. Mediator functions as a bridge to convey information from gene-specific regulatory proteins to the basal RNA polymerase II transcription machinery. Mediator is recruited to promoters by direct interactions with regulatory proteins and serves as a scaffold for the assembly of a functional preinitiation complex with RNA polymerase II and the general transcription factors. This is Mediator of RNA polymerase II transcription subunit 29 (MED29) from Pongo abelii (Sumatran orangutan).